Here is a 176-residue protein sequence, read N- to C-terminus: Interleukin-1 receptor antagonist protein (176 aa).

A signal peptide spans 1–25 (METCRCPLSYLISFLLFLSHSETAC). A disulfide bridge connects residues cysteine 91 and cysteine 141. Residue asparagine 109 is glycosylated (N-linked (GlcNAc...) asparagine).

Belongs to the IL-1 family.

Its subcellular location is the secreted. Anti-inflammatory antagonist of interleukin-1 family of proinflammatory cytokines such as interleukin-1beta/IL1B and interleukin-1alpha/IL1A. Protects from immune dysregulation and uncontrolled systemic inflammation triggered by IL1 for a range of innate stimulatory agents such as pathogens. This chain is Interleukin-1 receptor antagonist protein (IL1RN), found in Canis lupus familiaris (Dog).